Here is a 315-residue protein sequence, read N- to C-terminus: Homoserine kinase (315 aa).

97–107 contacts ATP; the sequence is PPARGLGSSAT.

The protein belongs to the GHMP kinase family. Homoserine kinase subfamily.

It is found in the cytoplasm. The enzyme catalyses L-homoserine + ATP = O-phospho-L-homoserine + ADP + H(+). It participates in amino-acid biosynthesis; L-threonine biosynthesis; L-threonine from L-aspartate: step 4/5. Functionally, catalyzes the ATP-dependent phosphorylation of L-homoserine to L-homoserine phosphate. The chain is Homoserine kinase from Synechococcus sp. (strain CC9902).